The primary structure comprises 178 residues: dCTP deaminase (178 aa).

DCTP is bound by residues 99–104 and Asp115; that span reads RSTWAR. Glu125 functions as the Proton donor/acceptor in the catalytic mechanism. Tyr157 and Gln164 together coordinate dCTP.

The protein belongs to the dCTP deaminase family. As to quaternary structure, homotrimer.

It carries out the reaction dCTP + H2O + H(+) = dUTP + NH4(+). Its pathway is pyrimidine metabolism; dUMP biosynthesis; dUMP from dCTP (dUTP route): step 1/2. Functionally, catalyzes the deamination of dCTP to dUTP. In Aeropyrum pernix (strain ATCC 700893 / DSM 11879 / JCM 9820 / NBRC 100138 / K1), this protein is dCTP deaminase.